The chain runs to 1010 residues: Polyhomeotic-like protein 1 (1010 aa).

Low complexity predominate over residues 1–22 (METESEQNSSSTNGSSSSGASS). Disordered regions lie at residues 1–25 (METESEQNSSSTNGSSSSGASSRPQ), 212–243 (NQQASAQGPQMPGSTQKAIPPGASPVSGLSQT), 259–312 (GQSL…TGVV), 444–506 (QQQG…SKPP), 565–588 (GAVQPGQAHLASSPPSSQAAPGAL), and 646–678 (KRKAESEEERDDLSALASVLPTKASPAAESPKV). The span at 212–228 (NQQASAQGPQMPGSTQK) shows a compositional bias: polar residues. The segment covering 279–292 (MGPGGGGQAPGGLG) has biased composition (gly residues). The segment covering 453–463 (PQPPQVPPTQQ) has biased composition (pro residues). Over residues 464 to 480 (VPPSQSQQQAQTLVVQP) the composition is skewed to low complexity. Over residues 488-500 (TLPPEPTSKPPIP) the composition is skewed to pro residues. The span at 575–587 (ASSPPSSQAAPGA) shows a compositional bias: low complexity. S651 is subject to Phosphoserine. K769 participates in a covalent cross-link: Glycyl lysine isopeptide (Lys-Gly) (interchain with G-Cter in SUMO2). The tract at residues 772 to 794 (QAGLPTGLNESQPSGPLGGDSPS) is disordered. Residues 797–831 (LEKKANLLKCEYCGKYAPAEQFRGSKRFCSMTCAK) form an FCS-type zinc finger. C806, C809, C825, and C829 together coordinate Zn(2+). The disordered stretch occupies residues 854–928 (ASYARVRRRG…LGNTITTPST (75 aa)). S904 bears the Phosphoserine mark. Position 928 is a phosphothreonine (T928). The 65-residue stretch at 946 to 1010 (WSVEEVYEFI…CAKINVLKET (65 aa)) folds into the SAM domain.

Homodimer. Component of a PRC1-like complex. Interacts with the SAM domain of SCMH1 via its SAM domain in vitro. Interacts with RNF2 and CBX7. Interacts with PHC2. Interacts with BMI1. In terms of tissue distribution, highly expressed in testis with lower levels in most other tissues. Expressed in embryonic stem cells.

The protein resides in the nucleus. Its function is as follows. Component of a Polycomb group (PcG) multiprotein PRC1-like complex, a complex class required to maintain the transcriptionally repressive state of many genes, including Hox genes, throughout development. PcG PRC1 complex acts via chromatin remodeling and modification of histones; it mediates monoubiquitination of histone H2A 'Lys-119', rendering chromatin heritably changed in its expressibility. Required for proper control of cellular levels of GMNN expression. The polypeptide is Polyhomeotic-like protein 1 (Mus musculus (Mouse)).